The sequence spans 626 residues: Probable metalloendopeptidase G1-type (626 aa).

H42 is a Zn(2+) binding site. The active site involves E45. H46 is a binding site for Zn(2+).

Belongs to the peptidase M44 family. Requires Zn(2+) as cofactor.

In terms of biological role, seems to be involved in viral proteins maturation by cleavage at Ala-Gly-|-Xaa motifs. The chain is Probable metalloendopeptidase G1-type from Fowlpox virus (strain NVSL) (FPV).